Here is a 326-residue protein sequence, read N- to C-terminus: Phospho-N-acetylmuramoyl-pentapeptide-transferase (326 aa).

A run of 9 helical transmembrane segments spans residues 3–23, 51–71, 79–99, 115–135, 138–158, 169–189, 195–215, 221–243, and 306–326; these read ISIS…PAFI, TMGG…FALF, VGMI…DDFL, LALQ…GGDI, VFGY…FWLV, GVDG…GVIA, MDIL…FIFN, VFMG…MALH, and FFFW…LYLM.

The protein belongs to the glycosyltransferase 4 family. MraY subfamily. The cofactor is Mg(2+).

It localises to the cell membrane. The enzyme catalyses UDP-N-acetyl-alpha-D-muramoyl-L-alanyl-gamma-D-glutamyl-L-lysyl-D-alanyl-D-alanine + di-trans,octa-cis-undecaprenyl phosphate = Mur2Ac(oyl-L-Ala-gamma-D-Glu-L-Lys-D-Ala-D-Ala)-di-trans,octa-cis-undecaprenyl diphosphate + UMP. Its pathway is cell wall biogenesis; peptidoglycan biosynthesis. Catalyzes the initial step of the lipid cycle reactions in the biosynthesis of the cell wall peptidoglycan: transfers peptidoglycan precursor phospho-MurNAc-pentapeptide from UDP-MurNAc-pentapeptide onto the lipid carrier undecaprenyl phosphate, yielding undecaprenyl-pyrophosphoryl-MurNAc-pentapeptide, known as lipid I. This chain is Phospho-N-acetylmuramoyl-pentapeptide-transferase, found in Streptococcus pneumoniae serotype 19F (strain G54).